Consider the following 205-residue polypeptide: Pyridoxal 5'-phosphate synthase subunit PdxT (205 aa).

Residue 53 to 55 (GES) participates in L-glutamine binding. Catalysis depends on Cys85, which acts as the Nucleophile. L-glutamine contacts are provided by residues Arg112 and 140–141 (IR). Active-site charge relay system residues include His176 and Glu178.

Belongs to the glutaminase PdxT/SNO family. As to quaternary structure, in the presence of PdxS, forms a dodecamer of heterodimers. Only shows activity in the heterodimer.

The catalysed reaction is aldehydo-D-ribose 5-phosphate + D-glyceraldehyde 3-phosphate + L-glutamine = pyridoxal 5'-phosphate + L-glutamate + phosphate + 3 H2O + H(+). The enzyme catalyses L-glutamine + H2O = L-glutamate + NH4(+). Its pathway is cofactor biosynthesis; pyridoxal 5'-phosphate biosynthesis. Catalyzes the hydrolysis of glutamine to glutamate and ammonia as part of the biosynthesis of pyridoxal 5'-phosphate. The resulting ammonia molecule is channeled to the active site of PdxS. The polypeptide is Pyridoxal 5'-phosphate synthase subunit PdxT (Haloquadratum walsbyi (strain DSM 16790 / HBSQ001)).